The primary structure comprises 1775 residues: Atrochrysone carboxylic acid synthase (1775 aa).

The region spanning 35–262 is the Starter acyltransferase (SAT) domain; the sequence is LRRLQALSKD…YAKWASLPIF (228 aa). Residues 400–833 enclose the Ketosynthase family 3 (KS3) domain; it reads DSKIAIVGMS…GGNTTMLLEE (434 aa). Residues C573, H708, and H750 each act as for beta-ketoacyl synthase activity in the active site. Positions 934–1244 constitute a Malonyl-CoA:ACP transacylase (MAT) domain; that stretch reads FAFTGQGAFY…ENNWNTLADS (311 aa). Positions 1313 to 1631 are product template (PT) domain; the sequence is TSSIHQVLQE…RSLLPTFFSP (319 aa). Residues 1317-1451 are N-terminal hotdog fold; that stretch reads HQVLQEDVTG…SAVVEYGDAN (135 aa). The 310-residue stretch at 1317–1626 folds into the PKS/mFAS DH domain; it reads HQVLQEDVTG…FRRFPRSLLP (310 aa). H1349 serves as the catalytic Proton acceptor; for dehydratase activity. The interval 1480–1626 is C-terminal hotdog fold; it reads AAVLPRNMAY…FRRFPRSLLP (147 aa). D1537 serves as the catalytic Proton donor; for dehydratase activity. Residues 1671–1697 are disordered; that stretch reads TAAPVPAPAPVPAKRAEPAPAAAQAAA. Residues 1688-1697 show a composition bias toward low complexity; that stretch reads PAPAAAQAAA. The region spanning 1697 to 1774 is the Carrier domain; the sequence is ATQNPTITGA…ELKTYIEETF (78 aa). S1734 carries the O-(pantetheine 4'-phosphoryl)serine modification.

The catalysed reaction is holo-[ACP] + 8 malonyl-CoA + 8 H(+) = atrochrysone carboxyl-[ACP] + 8 CO2 + 8 CoA + 2 H2O. The protein operates within secondary metabolite biosynthesis. Its function is as follows. Non-reducing polyketide synthase; part of the gene cluster that mediates the biosynthesis of physcion, a natural anthraquinone fungicide that can prevent plant fungal infections. The pathway begins with the polyketide synthase AcPKS that condenses 8 malonyl-CoA units to synthesize atrochrysone thioester which is released from the synthase by the atrochrysone carboxyl ACP thioesterase AcTE that breaks the thioester bond and leads to free atrochrysone carboxylic acid. Spontaneous decarboxylation of atrochrysone carboxylic acid leads to the formation of atrochrysone. Then, atrochrysone undergoes spontaneous dehydration and oxidation, giving the products emodin anthrone and emodin. The O-methyltransferase AcOMT then methylates the C-6 hydroxyl of emodin to form physcion. The polypeptide is Atrochrysone carboxylic acid synthase (Aspergillus chevalieri (Eurotium chevalieri)).